The following is a 442-amino-acid chain: UDP-N-acetylmuramoylalanine--D-glutamate ligase (442 aa).

113 to 119 (GSNGKTT) is a binding site for ATP.

It belongs to the MurCDEF family.

The protein resides in the cytoplasm. The catalysed reaction is UDP-N-acetyl-alpha-D-muramoyl-L-alanine + D-glutamate + ATP = UDP-N-acetyl-alpha-D-muramoyl-L-alanyl-D-glutamate + ADP + phosphate + H(+). Its pathway is cell wall biogenesis; peptidoglycan biosynthesis. Functionally, cell wall formation. Catalyzes the addition of glutamate to the nucleotide precursor UDP-N-acetylmuramoyl-L-alanine (UMA). This is UDP-N-acetylmuramoylalanine--D-glutamate ligase from Coxiella burnetii (strain CbuK_Q154) (Coxiella burnetii (strain Q154)).